Reading from the N-terminus, the 248-residue chain is Phycocyanobilin:ferredoxin oxidoreductase (248 aa).

It belongs to the HY2 family.

It carries out the reaction (2R,3Z)-phycocyanobilin + 4 oxidized [2Fe-2S]-[ferredoxin] = biliverdin IXalpha + 4 reduced [2Fe-2S]-[ferredoxin] + 4 H(+). Functionally, catalyzes the four-electron reduction of biliverdin IX-alpha (2-electron reduction at both the A and D rings); the reaction proceeds via an isolatable 2-electron intermediate, 181,182-dihydrobiliverdin. This Synechocystis sp. (strain ATCC 27184 / PCC 6803 / Kazusa) protein is Phycocyanobilin:ferredoxin oxidoreductase (pcyA).